Consider the following 303-residue polypeptide: MSAQLTSRLRGYVQVTKPGIIMGNLISVAGGFLLAAQGNVDLTLMFATMIGLSLVVASGCAVNNCIDRDIDAKMQRTRNRVTVTGEISVQAVLSFGIGLGIIGFAMLAIFTNSLAVLFAAIGYVVYVGVYSLYMKRNSVYGTLVGSFSGAVPPVVGYCAVTGQMDMGAVILLLMFSLWQMPHSYAIAIFRFDDYAAANIPVLPVAQGMTKAKLHIVLYIAVFAVVSALLPLAGYTGIAFMAVTFATSLWWLAMALKGYRRDINLQSWARQVFGFSIITITALSVTMALDFQVVAQTPLLTLVP.

Helical transmembrane passes span proline 18–glycine 38, leucine 42–valine 62, alanine 91–threonine 111, leucine 114–methionine 134, valine 139–alanine 159, valine 169–phenylalanine 189, leucine 213–glycine 233, threonine 235–leucine 255, and phenylalanine 274–alanine 294.

The protein belongs to the UbiA prenyltransferase family. Protoheme IX farnesyltransferase subfamily.

The protein resides in the cell inner membrane. The catalysed reaction is heme b + (2E,6E)-farnesyl diphosphate + H2O = Fe(II)-heme o + diphosphate. The protein operates within porphyrin-containing compound metabolism; heme O biosynthesis; heme O from protoheme: step 1/1. In terms of biological role, converts heme B (protoheme IX) to heme O by substitution of the vinyl group on carbon 2 of heme B porphyrin ring with a hydroxyethyl farnesyl side group. In Shewanella frigidimarina (strain NCIMB 400), this protein is Protoheme IX farnesyltransferase 1.